The following is a 296-amino-acid chain: Protoheme IX farnesyltransferase 2 (296 aa).

9 helical membrane passes run 7–27 (LLVA…GGYF), 36–56 (PMLL…GCVL), 83–103 (LKAA…LLWW), 108–128 (LTTA…SLWF), 134–154 (YGTL…YCAV), 163–183 (ASLL…IAIF), 207–227 (IHIV…CLGG), 229–249 (AGYG…AIAL), and 265–285 (FAFS…DFQV).

The protein belongs to the UbiA prenyltransferase family. Protoheme IX farnesyltransferase subfamily.

Its subcellular location is the cell inner membrane. It catalyses the reaction heme b + (2E,6E)-farnesyl diphosphate + H2O = Fe(II)-heme o + diphosphate. The protein operates within porphyrin-containing compound metabolism; heme O biosynthesis; heme O from protoheme: step 1/1. In terms of biological role, converts heme B (protoheme IX) to heme O by substitution of the vinyl group on carbon 2 of heme B porphyrin ring with a hydroxyethyl farnesyl side group. This chain is Protoheme IX farnesyltransferase 2, found in Pseudomonas aeruginosa (strain UCBPP-PA14).